A 133-amino-acid chain; its full sequence is CDGSH iron-sulfur domain-containing protein 2 homolog (133 aa).

The Lumenal portion of the chain corresponds to 1–35 (MEPISHLVKSSLPNYLSSLPIPDSVGGWFKLSFKD). A helical transmembrane segment spans residues 36–58 (WLALIPPTVVVAGIGYTAYLAYC). Over 59–133 (PAAKAICSAK…DNVGPIVIKK (75 aa)) the chain is Cytoplasmic. [2Fe-2S] cluster-binding residues include Cys-100, Cys-102, Cys-111, and His-115.

This sequence belongs to the CISD protein family. CISD2 subfamily. [2Fe-2S] cluster serves as cofactor.

The protein resides in the endoplasmic reticulum membrane. This chain is CDGSH iron-sulfur domain-containing protein 2 homolog, found in Drosophila yakuba (Fruit fly).